A 229-amino-acid polypeptide reads, in one-letter code: Ribonuclease 3 (229 aa).

In terms of domain architecture, RNase III spans 5–127 (LDRLERKLGY…LIGAIYQDAD (123 aa)). Position 40 (Glu-40) interacts with Mg(2+). Residue Asp-44 is part of the active site. Positions 113 and 116 each coordinate Mg(2+). Glu-116 is a catalytic residue. Residues 154 to 224 (DPKTRLQEFL…AAAALIALGV (71 aa)) form the DRBM domain.

This sequence belongs to the ribonuclease III family. Homodimer. Requires Mg(2+) as cofactor.

The protein localises to the cytoplasm. The enzyme catalyses Endonucleolytic cleavage to 5'-phosphomonoester.. Digests double-stranded RNA. Involved in the processing of primary rRNA transcript to yield the immediate precursors to the large and small rRNAs (23S and 16S). Processes some mRNAs, and tRNAs when they are encoded in the rRNA operon. Processes pre-crRNA and tracrRNA of type II CRISPR loci if present in the organism. The polypeptide is Ribonuclease 3 (Pseudomonas entomophila (strain L48)).